The sequence spans 197 residues: MFLLLKKLYITFARSSRIIITLVIIDQLSKWWFIDDLRWKPGLMLKVTSFLNMVYTWNYGISFGLMREYYQYSNAIFLITNTLIVCYLYYLMIRSKTIGSFAGYSFVIGGAVGNLIDRFFRGAVFDFIHFHYQNYSFPVFNLADCFITIGVIILIEDYYSTKKVIEEKAKGNYDNAQIEAMAEKIRNAGHNGDDIVN.

The next 2 membrane-spanning stretches (helical) occupy residues Ser-73–Ile-93 and Thr-97–Asp-117. Active-site residues include Asp-126 and Asp-144. A helical transmembrane segment spans residues Tyr-135 to Ile-155.

It belongs to the peptidase A8 family.

The protein resides in the cell inner membrane. The catalysed reaction is Release of signal peptides from bacterial membrane prolipoproteins. Hydrolyzes -Xaa-Yaa-Zaa-|-(S,diacylglyceryl)Cys-, in which Xaa is hydrophobic (preferably Leu), and Yaa (Ala or Ser) and Zaa (Gly or Ala) have small, neutral side chains.. It participates in protein modification; lipoprotein biosynthesis (signal peptide cleavage). In terms of biological role, this protein specifically catalyzes the removal of signal peptides from prolipoproteins. The sequence is that of Lipoprotein signal peptidase from Rickettsia felis (strain ATCC VR-1525 / URRWXCal2) (Rickettsia azadi).